A 176-amino-acid chain; its full sequence is 2-C-methyl-D-erythritol 2,4-cyclodiphosphate synthase (176 aa).

Residues Asp-23, His-25, and His-60 each contribute to the a divalent metal cation site. 23–25 (DSH) lines the 4-CDP-2-C-methyl-D-erythritol 2-phosphate pocket. 149-152 (TSGE) is a 4-CDP-2-C-methyl-D-erythritol 2-phosphate binding site.

This sequence belongs to the IspF family. As to quaternary structure, homotrimer. It depends on a divalent metal cation as a cofactor.

It carries out the reaction 4-CDP-2-C-methyl-D-erythritol 2-phosphate = 2-C-methyl-D-erythritol 2,4-cyclic diphosphate + CMP. Its pathway is isoprenoid biosynthesis; isopentenyl diphosphate biosynthesis via DXP pathway; isopentenyl diphosphate from 1-deoxy-D-xylulose 5-phosphate: step 4/6. Involved in the biosynthesis of isopentenyl diphosphate (IPP) and dimethylallyl diphosphate (DMAPP), two major building blocks of isoprenoid compounds. Catalyzes the conversion of 4-diphosphocytidyl-2-C-methyl-D-erythritol 2-phosphate (CDP-ME2P) to 2-C-methyl-D-erythritol 2,4-cyclodiphosphate (ME-CPP) with a corresponding release of cytidine 5-monophosphate (CMP). This is 2-C-methyl-D-erythritol 2,4-cyclodiphosphate synthase from Chlamydia caviae (strain ATCC VR-813 / DSM 19441 / 03DC25 / GPIC) (Chlamydophila caviae).